A 511-amino-acid polypeptide reads, in one-letter code: NAD(P)H-quinone oxidoreductase subunit 2 B, chloroplastic (511 aa).

Transmembrane regions (helical) follow at residues 24-44, 57-77, 99-119, 124-144, 149-169, 183-203, 227-247, 295-315, 323-343, 354-374, 395-415, 418-438, and 484-504; these read LLLFHGSFIFPECILIFGLIL, IPWLYFISSTSLVMSIAALLF, IFQFLILLCSTLCIPLSVEYI, MAITEFLLFVLTATLGGMFLC, LITIFVAPECFSLCSYLLSGY, YLLMGGASSSILVHGFSWLYG, PGISIALIFITVGIGFKLSPA, WHLLLEILAILSMILGNLIAI, MLAYSSIGQIGYVIIGIIVGD, YMLFYISMNLGTFACIVLFGL, ALSLALCLLSLGGLPPLAGFF, LHLFWCGWQAGLYFLVSIGLL, and MIVCVIASTIPGISMNPIIAI.

Belongs to the complex I subunit 2 family. As to quaternary structure, NDH is composed of at least 16 different subunits, 5 of which are encoded in the nucleus.

It is found in the plastid. The protein resides in the chloroplast thylakoid membrane. It catalyses the reaction a plastoquinone + NADH + (n+1) H(+)(in) = a plastoquinol + NAD(+) + n H(+)(out). The catalysed reaction is a plastoquinone + NADPH + (n+1) H(+)(in) = a plastoquinol + NADP(+) + n H(+)(out). Its function is as follows. NDH shuttles electrons from NAD(P)H:plastoquinone, via FMN and iron-sulfur (Fe-S) centers, to quinones in the photosynthetic chain and possibly in a chloroplast respiratory chain. The immediate electron acceptor for the enzyme in this species is believed to be plastoquinone. Couples the redox reaction to proton translocation, and thus conserves the redox energy in a proton gradient. This Nandina domestica (Heavenly bamboo) protein is NAD(P)H-quinone oxidoreductase subunit 2 B, chloroplastic.